Here is a 547-residue protein sequence, read N- to C-terminus: Large cysteine-rich periplasmic protein OmcB (547 aa).

The N-terminal stretch at 1 to 22 (MNKLIRRAVTIFAVTSVASLFA) is a signal peptide. A disordered region spans residues 45–84 (KAKDNTSHKSKKARKNHSKETPVNRKKVAPVHESKATGPK). Residues 52–61 (HKSKKARKNH) are compositionally biased toward basic residues.

In terms of assembly, part of a disulfide cross-linked outer membrane complex (COMC) composed of the major outer membrane porin (MOMP), the small cysteine-rich protein (OmcA) and the large cysteine-rich periplasmic protein (OmcB).

It is found in the periplasm. In elementary bodies (EBs, the infectious stage, which is able to survive outside the host cell) provides the structural integrity of the outer envelope through disulfide cross-links with the small cysteine-rich protein and the major outer membrane protein. It has been described in publications as the Sarkosyl-insoluble COMC (Chlamydia outer membrane complex), and serves as the functional equivalent of peptidoglycan. The protein is Large cysteine-rich periplasmic protein OmcB (omcB) of Chlamydia trachomatis serovar L2 (strain ATCC VR-902B / DSM 19102 / 434/Bu).